A 338-amino-acid polypeptide reads, in one-letter code: Solute carrier family 35 member G5 (338 aa).

The segment at 1–28 (MAGSHPYFNLPDSTHPSPPSGPPSLRWH) is disordered. The next 9 membrane-spanning stretches (helical) occupy residues 37 to 57 (TNGL…VGPL), 67 to 87 (LPSL…ALLL), 105 to 125 (CFCA…VQVV), 160 to 180 (CGLL…LWTL), 190 to 210 (ALGY…LLVY), 221 to 241 (TVAF…LFVL), 250 to 270 (LLSW…FTCV), 281 to 301 (LVCA…YYML), and 310 to 330 (IMGA…NLSC). One can recognise an EamA 1 domain in the interval 49-174 (LPAGFVGPLS…SILGLIIIVG (126 aa)). The region spanning 272 to 325 (YAVTKAHPALVCAVLHSEVVVALILQYYMLPETVAPSDIMGAGVVLGNITIIPA) is the EamA 2 domain.

It belongs to the SLC35G solute transporter family.

The protein localises to the membrane. The protein is Solute carrier family 35 member G5 (SLC35G5) of Gorilla gorilla gorilla (Western lowland gorilla).